A 363-amino-acid polypeptide reads, in one-letter code: F-box protein At3g44326 (363 aa).

The interval Met1 to Ala23 is disordered. The F-box domain maps to Asp27–Cys66.

This is F-box protein At3g44326 from Arabidopsis thaliana (Mouse-ear cress).